Reading from the N-terminus, the 341-residue chain is DNA-directed RNA polymerase subunit alpha (341 aa).

Residues 1 to 223 are alpha N-terminal domain (alpha-NTD); sequence MEQKRPQLKA…DELSVFGNVE (223 aa). An alpha C-terminal domain (alpha-CTD) region spans residues 268-341; sequence PQPFPTDQDT…LAQFGLALRD (74 aa).

Belongs to the RNA polymerase alpha chain family. In terms of assembly, homodimer. The RNAP catalytic core consists of 2 alpha, 1 beta, 1 beta' and 1 omega subunit. When a sigma factor is associated with the core the holoenzyme is formed, which can initiate transcription.

The catalysed reaction is RNA(n) + a ribonucleoside 5'-triphosphate = RNA(n+1) + diphosphate. In terms of biological role, DNA-dependent RNA polymerase catalyzes the transcription of DNA into RNA using the four ribonucleoside triphosphates as substrates. The polypeptide is DNA-directed RNA polymerase subunit alpha (Deinococcus radiodurans (strain ATCC 13939 / DSM 20539 / JCM 16871 / CCUG 27074 / LMG 4051 / NBRC 15346 / NCIMB 9279 / VKM B-1422 / R1)).